The following is a 425-amino-acid chain: Succinyl-diaminopimelate desuccinylase (425 aa).

Position 96 (H96) interacts with Zn(2+). Residue D98 is part of the active site. D129 contributes to the Zn(2+) binding site. The active-site Proton acceptor is the E163. Positions 164, 192, and 378 each coordinate Zn(2+).

The protein belongs to the peptidase M20A family. DapE subfamily. As to quaternary structure, homodimer. It depends on Zn(2+) as a cofactor. Co(2+) is required as a cofactor.

It catalyses the reaction N-succinyl-(2S,6S)-2,6-diaminopimelate + H2O = (2S,6S)-2,6-diaminopimelate + succinate. It functions in the pathway amino-acid biosynthesis; L-lysine biosynthesis via DAP pathway; LL-2,6-diaminopimelate from (S)-tetrahydrodipicolinate (succinylase route): step 3/3. Its function is as follows. Catalyzes the hydrolysis of N-succinyl-L,L-diaminopimelic acid (SDAP), forming succinate and LL-2,6-diaminopimelate (DAP), an intermediate involved in the bacterial biosynthesis of lysine and meso-diaminopimelic acid, an essential component of bacterial cell walls. This Polaromonas sp. (strain JS666 / ATCC BAA-500) protein is Succinyl-diaminopimelate desuccinylase.